Consider the following 196-residue polypeptide: Beta-crystallin A4 (196 aa).

T2 carries the N-acetylthreonine modification. The N-terminal arm stretch occupies residues 2 to 11; it reads TLQCTKSAGP. 2 consecutive Beta/gamma crystallin 'Greek key' domains span residues 12–51 and 52–98; these read WKMV…KVLS and GAWV…RPAA. The segment at 99–104 is connecting peptide; it reads CANHRD. Beta/gamma crystallin 'Greek key' domains follow at residues 105-146 and 147-195; these read SRLT…HVHS and GAWV…RRIQ.

It belongs to the beta/gamma-crystallin family. Homo/heterodimer, or complexes of higher-order. The structure of beta-crystallin oligomers seems to be stabilized through interactions between the N-terminal arms.

Functionally, crystallins are the dominant structural components of the vertebrate eye lens. This is Beta-crystallin A4 (CRYBA4) from Homo sapiens (Human).